A 292-amino-acid chain; its full sequence is Ribosomal RNA small subunit methyltransferase A (292 aa).

S-adenosyl-L-methionine is bound by residues asparagine 28, leucine 30, glycine 55, glutamate 76, aspartate 101, and asparagine 126.

The protein belongs to the class I-like SAM-binding methyltransferase superfamily. rRNA adenine N(6)-methyltransferase family. RsmA subfamily.

It localises to the cytoplasm. It carries out the reaction adenosine(1518)/adenosine(1519) in 16S rRNA + 4 S-adenosyl-L-methionine = N(6)-dimethyladenosine(1518)/N(6)-dimethyladenosine(1519) in 16S rRNA + 4 S-adenosyl-L-homocysteine + 4 H(+). Its function is as follows. Specifically dimethylates two adjacent adenosines (A1518 and A1519) in the loop of a conserved hairpin near the 3'-end of 16S rRNA in the 30S particle. May play a critical role in biogenesis of 30S subunits. In Bacillus cereus (strain G9842), this protein is Ribosomal RNA small subunit methyltransferase A.